The primary structure comprises 628 residues: Vacuolar-sorting receptor 3 (628 aa).

The signal sequence occupies residues 1–24 (MKQLLCYLPWLLLLTLLVSPLNDA). Over 25–569 (RFVVEKNSLS…SKTGAQVRSA (545 aa)) the chain is Lumenal. The region spanning 56 to 168 (QYGGSMAGTV…GFGEKLKKAI (113 aa)) is the PA domain. 3 N-linked (GlcNAc...) asparagine glycosylation sites follow: asparagine 148, asparagine 294, and asparagine 434. EGF-like domains lie at 416–466 (ESNE…SHCE) and 469–516 (GPGR…KKCE). 7 cysteine pairs are disulfide-bonded: cysteine 420/cysteine 438, cysteine 427/cysteine 447, cysteine 449/cysteine 465, cysteine 473/cysteine 493, cysteine 480/cysteine 501, cysteine 503/cysteine 515, and cysteine 545/cysteine 558. The EGF-like 3; calcium-binding domain maps to 517–559 (DINECKEKKACQCPECSCKNTWGSYECSCSGDLLYIRDHDTCI). The helical transmembrane segment at 570-590 (WAAVWLIMLSLGLAAAGAYLV) threads the bilayer. The Cytoplasmic segment spans residues 591–628 (YKYRLRQYMDSEIRAIMAQYMPLDSQPEIPNHVNDERA). Positions 610 to 613 (YMPL) match the Tyrosine-based internalization motif motif.

This sequence belongs to the VSR (BP-80) family. Expressed in seeds, seedlings, roots, leaves, flowers and siliques.

The protein resides in the membrane. It localises to the golgi apparatus membrane. It is found in the cytoplasmic vesicle. Its subcellular location is the clathrin-coated vesicle membrane. The protein localises to the prevacuolar compartment membrane. In terms of biological role, vacuolar-sorting receptor (VSR) involved in clathrin-coated vesicles sorting from Golgi apparatus to vacuoles. The polypeptide is Vacuolar-sorting receptor 3 (VSR3) (Arabidopsis thaliana (Mouse-ear cress)).